Consider the following 283-residue polypeptide: Acetylglutamate kinase (283 aa).

Residues 63 to 64, Arg85, and Asn178 contribute to the substrate site; that span reads GG.

The protein belongs to the acetylglutamate kinase family. ArgB subfamily.

The protein resides in the cytoplasm. The enzyme catalyses N-acetyl-L-glutamate + ATP = N-acetyl-L-glutamyl 5-phosphate + ADP. It functions in the pathway amino-acid biosynthesis; L-arginine biosynthesis; N(2)-acetyl-L-ornithine from L-glutamate: step 2/4. Its function is as follows. Catalyzes the ATP-dependent phosphorylation of N-acetyl-L-glutamate. This is Acetylglutamate kinase from Prochlorococcus marinus (strain AS9601).